We begin with the raw amino-acid sequence, 277 residues long: Large ribosomal subunit protein uL2 (277 aa).

Disordered regions lie at residues 24–55 (ITTS…RHHG) and 221–277 (RGSV…RKKK).

This sequence belongs to the universal ribosomal protein uL2 family. As to quaternary structure, part of the 50S ribosomal subunit. Forms a bridge to the 30S subunit in the 70S ribosome.

Its function is as follows. One of the primary rRNA binding proteins. Required for association of the 30S and 50S subunits to form the 70S ribosome, for tRNA binding and peptide bond formation. It has been suggested to have peptidyltransferase activity; this is somewhat controversial. Makes several contacts with the 16S rRNA in the 70S ribosome. This is Large ribosomal subunit protein uL2 from Listeria welshimeri serovar 6b (strain ATCC 35897 / DSM 20650 / CCUG 15529 / CIP 8149 / NCTC 11857 / SLCC 5334 / V8).